We begin with the raw amino-acid sequence, 224 residues long: Urease accessory protein UreF (224 aa).

Belongs to the UreF family. UreD, UreF and UreG form a complex that acts as a GTP-hydrolysis-dependent molecular chaperone, activating the urease apoprotein by helping to assemble the nickel containing metallocenter of UreC. The UreE protein probably delivers the nickel.

Its subcellular location is the cytoplasm. Functionally, required for maturation of urease via the functional incorporation of the urease nickel metallocenter. This is Urease accessory protein UreF from Pseudomonas putida (strain ATCC 700007 / DSM 6899 / JCM 31910 / BCRC 17059 / LMG 24140 / F1).